Reading from the N-terminus, the 353-residue chain is MTEPLKPRIDFDGPLDVDQNPKFRAQQTFDENQAQNFAPATLDEAPEEEGQVEAVMDAALRPKRSLWRKMVMGGLALFGASVVGQGVQWTMNAWQTQDWVALGGCAAGALIIGAGVGSVVTEWRRLWRLRQRAHERDEARDLLHSHGTGKGRAFCEKLAQQAGIDQSHPALQRWYASIHETQNDREVVSLYAHLVQPVLDAQARREISRSAAESTLMIAVSPLALVDMAFIAWRNLRLINRIATLYGIELGYYSRLRLFKLVLLNIAFAGASELVREVGMDWMSQDLAARLSTRAAQGIGAGLLTARLGIKAMELCRPLPWIDDDKPRLGDFRRQLIGQVKETLQKGKTPSEK.

The next 3 helical transmembrane spans lie at 70–90 (MVMG…VQWT), 100–120 (VALG…GSVV), and 213–233 (ESTL…FIAW).

This sequence belongs to the UPF0283 family.

The protein resides in the cell inner membrane. This is UPF0283 membrane protein YcjF from Escherichia coli O127:H6 (strain E2348/69 / EPEC).